The following is a 190-amino-acid chain: MAEKTQKSVKIAPGAVVCVESEIRGDVTIGPRTVIHPKARIIAEAGPIVIGEGNLIEEQALIINAYPDNITPDTEDPEPKPMIIGTNNVFEVGCYSQAMKMGDNNVIESKAYVGRNVILTSGCIIGACCNLNTFEVIPENTVIYGADCLRRVQTERPQPQTLQLDLLMKILPNYHHLKKTMKGSSTPVKN.

Thr186 bears the Phosphothreonine; by CDK1 mark.

This sequence belongs to the dynactin subunits 5/6 family. Dynactin subunit 6 subfamily. In terms of assembly, subunit of dynactin, a multiprotein complex part of a tripartite complex with dynein and a adapter, such as BICDL1, BICD2 or HOOK3. The dynactin complex is built around ACTR1A/ACTB filament and consists of an actin-related filament composed of a shoulder domain, a pointed end and a barbed end. Its length is defined by its flexible shoulder domain. The soulder is composed of 2 DCTN1 subunits, 4 DCTN2 and 2 DCTN3. The 4 DCNT2 (via N-terminus) bind the ACTR1A filament and act as molecular rulers to determine the length. The pointed end is important for binding dynein-dynactin cargo adapters. Consists of 4 subunits: ACTR10, DCNT4, DCTN5 and DCTN6. Within the complex DCTN6 forms a heterodimer with DCTN5. The barbed end is composed of a CAPZA1:CAPZB heterodimers, which binds ACTR1A/ACTB filament and dynactin and stabilizes dynactin. Interacts with PLK1. Interacts with N4BP2L1. Post-translationally, phosphorylation at Thr-186 by CDK1 during mitotic prometaphase creates a binding site for PLK1 that facilitates its recruitment to kinetochores.

It localises to the cytoplasm. The protein localises to the cytoskeleton. Its subcellular location is the chromosome. It is found in the centromere. The protein resides in the kinetochore. In terms of biological role, part of the dynactin complex that activates the molecular motor dynein for ultra-processive transport along microtubules. This chain is Dynactin subunit 6 (DCTN6), found in Pongo abelii (Sumatran orangutan).